Reading from the N-terminus, the 547-residue chain is Protein RBL (547 aa).

5 WD repeats span residues 21 to 60, 65 to 104, 214 to 253, 285 to 332, and 334 to 373; these read LEHGVIKCVAFNHRGSLLAAGCADGGCVIWDFETRGIAKE, DCSAAITSVSWSKYGHRLLVSAADKSLTLWDVSTGEKIAR, SGAAPVKNIVFSRNGQYLLTNSHDRTIRIYENLLPAKNVL, EFQD…VKIL, and GPKEALIDLAWHPVHPIIVSVSLAGLVYIWAKDYTENWSA. The segment at 466–547 is disordered; the sequence is SPASEEAGQN…GGDDDDDAYY (82 aa). The span at 499–511 shows a compositional bias: basic and acidic residues; that stretch reads SEKAMELQAEKAK. The span at 530 to 547 shows a compositional bias: acidic residues; that stretch reads QETDDSINGGDDDDDAYY.

Part of a complex composed of TRO, RBL and WDR5A. Interacts with TRO and WDR5A, but not with WDR5B. This complex is formed during both vegetative and reproductive development. As to expression, strongly expressed in root tips, shoot apices, vascular tissues, developing embryos and endosperms.

The protein localises to the nucleus. Its function is as follows. Promotes the expression of FLC and FLC homologs to repress the floral transition. Promotes WRKY70 and LTP7 genes epigenetic methylation (e.g. H3K4me3) and subsequent expression. This chain is Protein RBL, found in Arabidopsis thaliana (Mouse-ear cress).